We begin with the raw amino-acid sequence, 305 residues long: UDP-3-O-acyl-N-acetylglucosamine deacetylase (305 aa).

The Zn(2+) site is built by His78, His237, and Asp241. His264 functions as the Proton donor in the catalytic mechanism.

This sequence belongs to the LpxC family. Requires Zn(2+) as cofactor.

The enzyme catalyses a UDP-3-O-[(3R)-3-hydroxyacyl]-N-acetyl-alpha-D-glucosamine + H2O = a UDP-3-O-[(3R)-3-hydroxyacyl]-alpha-D-glucosamine + acetate. It functions in the pathway glycolipid biosynthesis; lipid IV(A) biosynthesis; lipid IV(A) from (3R)-3-hydroxytetradecanoyl-[acyl-carrier-protein] and UDP-N-acetyl-alpha-D-glucosamine: step 2/6. In terms of biological role, catalyzes the hydrolysis of UDP-3-O-myristoyl-N-acetylglucosamine to form UDP-3-O-myristoylglucosamine and acetate, the committed step in lipid A biosynthesis. The protein is UDP-3-O-acyl-N-acetylglucosamine deacetylase of Burkholderia multivorans (strain ATCC 17616 / 249).